A 92-amino-acid polypeptide reads, in one-letter code: Putative transmembrane protein ORF92 (92 aa).

3 consecutive transmembrane segments (helical) span residues 11-28, 32-52, and 54-74; these read FVKG…TYAI, FFSS…LFAS, and FLFD…IGVG.

The protein localises to the host membrane. This is Putative transmembrane protein ORF92 from Acidianus convivator (ABV).